The sequence spans 149 residues: Large ribosomal subunit protein bL9 (149 aa).

This sequence belongs to the bacterial ribosomal protein bL9 family.

In terms of biological role, binds to the 23S rRNA. In Sulfurihydrogenibium sp. (strain YO3AOP1), this protein is Large ribosomal subunit protein bL9.